The sequence spans 308 residues: Tetraacyldisaccharide 4'-kinase (308 aa).

Residue 63 to 70 coordinates ATP; it reads SFGGNGKT.

It belongs to the LpxK family.

The catalysed reaction is a lipid A disaccharide + ATP = a lipid IVA + ADP + H(+). The protein operates within glycolipid biosynthesis; lipid IV(A) biosynthesis; lipid IV(A) from (3R)-3-hydroxytetradecanoyl-[acyl-carrier-protein] and UDP-N-acetyl-alpha-D-glucosamine: step 6/6. Transfers the gamma-phosphate of ATP to the 4'-position of a tetraacyldisaccharide 1-phosphate intermediate (termed DS-1-P) to form tetraacyldisaccharide 1,4'-bis-phosphate (lipid IVA). The sequence is that of Tetraacyldisaccharide 4'-kinase from Campylobacter jejuni subsp. jejuni serotype O:6 (strain 81116 / NCTC 11828).